The chain runs to 443 residues: Probable D-serine dehydratase (443 aa).

K116 bears the N6-(pyridoxal phosphate)lysine mark.

The protein belongs to the serine/threonine dehydratase family. DsdA subfamily. Pyridoxal 5'-phosphate is required as a cofactor.

It catalyses the reaction D-serine = pyruvate + NH4(+). The sequence is that of Probable D-serine dehydratase from Bacillus cereus (strain G9842).